The chain runs to 494 residues: Gram-negative bacteria-binding protein 1 (494 aa).

Positions 1 to 19 (MPGLCIGILLLIGFGCTTA) are cleaved as a signal peptide. Residues 20–120 (YKIPTPTVEL…QPLPVCNLGG (101 aa)) form the CBM39 domain. N-linked (GlcNAc...) asparagine glycosylation is found at Asn-56 and Asn-81. The tract at residues 126 to 160 (GCSPGDDDFTDDNQLSTEDSALEPTAPSVCEPSES) is disordered. The GH16 domain occupies 135-494 (TDDNQLSTED…DYVRVFATDN (360 aa)). Asn-185 carries an N-linked (GlcNAc...) asparagine glycan.

It belongs to the insect beta-1,3-glucan binding protein family.

The protein resides in the cell membrane. Plays a key role in innate immunity by acting as a pattern recognition receptor for beta-1,3-glucan from fungi and lipopolysaccharide from Gram-negative bacteria. Upon recognition of invading microorganism-derived products, acts upstream of protease spz processing enzyme SPE to activate the Toll pathway and to induce the expression of antimicrobial peptides drosomycin, cecropin and attacin. This Drosophila melanogaster (Fruit fly) protein is Gram-negative bacteria-binding protein 1.